The chain runs to 555 residues: MRVLFIHPNYHSGGAEIAGNWPPAWVAYLAGYLKAGGYTDVIFVDAMTNDLSEDQVREKITTLKPDIVGCTAITPAIYKAERTLQIAKEVNPDIVTVLGGIHGTFMYPQVLKEAPWIDAIVRGEGEQVMLNLVTAVDQGRFMADRNCVNGIAYAAPDGKVVATPAEPPIEDLDRITPDWGILEWEKYIYIPMNKRVAIPNFARGCPFTCSFCSQWKFWRDYRIRDPKKVVDEIEVLVKQHDVGFFILADEEPTIHRKKFIEFCEELIKRDLGVLWGINTRVTDILRDEKLLPLFRKAGLIHVSLGTEAAAQLKLDMVNKETTIEQNKRAIQLLKDNGIVTEAQFIVGLENETAETLEETYKMARDWNPDMANWAMYTPWPFSDLFQELGDKVEVFDFEKYNFVTPIMKPDAMDRGELLDRVMSNYRRFFMNKAFLQYPFTKDKERRKYLMGCLKAFLKSGFERKFYDLGRVGYWGPQTKKTVNFSFDKNRRIDAQTADELSRVDDGWVTMHGPKIEMRRRKGDDNFEIAKAAMACGGGTEQLTEEQQAATEVRAS.

The B12-binding domain maps to 9 to 143 (NYHSGGAEIA…TAVDQGRFMA (135 aa)). Residues 191–416 (PMNKRVAIPN…MKPDAMDRGE (226 aa)) form the Radical SAM core domain. [4Fe-4S] cluster contacts are provided by Cys205, Cys209, and Cys212.

Belongs to the BchE family. [4Fe-4S] cluster is required as a cofactor. Adenosylcob(III)alamin serves as cofactor.

It catalyses the reaction Mg-protoporphyrin IX 13-monomethyl ester + 3 S-adenosyl-L-methionine + H2O = 3,8-divinyl protochlorophyllide a + 3 5'-deoxyadenosine + 3 L-methionine + 4 H(+). It participates in porphyrin-containing compound metabolism; bacteriochlorophyll biosynthesis (light-independent). Functionally, involved in the tetrapyrrole biosynthetic pathways leading to chlorophyll and bacteriochlorophyll (BChl). Catalyzes the anaerobic formation of the isocyclic ring (E-ring) in Mg-protoporphyrin monomethyl ester (MPE) to yield protochlorophyllide a (PChlide a) via a six-electron oxidation and the formation of an oxo group at position C13 using oxygen from a water molecule. The chain is Anaerobic magnesium-protoporphyrin IX monomethyl ester cyclase (bchE) from Rubrivivax gelatinosus (Rhodocyclus gelatinosus).